A 260-amino-acid chain; its full sequence is tRNA pseudouridine synthase C (260 aa).

Residue D54 is part of the active site.

The protein belongs to the pseudouridine synthase RluA family.

The enzyme catalyses uridine(65) in tRNA = pseudouridine(65) in tRNA. Its function is as follows. Responsible for synthesis of pseudouridine from uracil-65 in transfer RNAs. This is tRNA pseudouridine synthase C (truC) from Escherichia coli (strain K12).